Reading from the N-terminus, the 43-residue chain is Protein PsbN (43 aa).

A helical membrane pass occupies residues 5–27 (TLVXISISGSLVSFTGYALYTAF).

Belongs to the PsbN family.

Its subcellular location is the plastid. It localises to the chloroplast thylakoid membrane. Its function is as follows. May play a role in photosystem I and II biogenesis. The protein is Protein PsbN of Calycanthus floridus (Eastern sweetshrub).